Consider the following 491-residue polypeptide: Cytochrome P450 monooxygenase 521A1 (491 aa).

Residues 1–21 (MILLTLLYLIIFYIIIDFIKK) traverse the membrane as a helical segment. Cysteine 438 contributes to the heme binding site.

Belongs to the cytochrome P450 family. Requires heme as cofactor.

Its subcellular location is the membrane. It catalyses the reaction discoidol + reduced [NADPH--hemoprotein reductase] + O2 = discodiene + acetone + oxidized [NADPH--hemoprotein reductase] + 2 H2O + H(+). It functions in the pathway sesquiterpene biosynthesis. Cytochrome P450 monooxygenase; part of the gene cluster that mediates the biosynthesis of the trisnorsesquiterpene discodiene which has a function during later stages of multicellular development, during the transition from fingers to Mexican hats. The terpene synthase tps8 converts its substrate farnesyl diphosphate (FDP) into the bicyclic sesquiterpene alcohol discoidol. The cytochrome P450 monooxygenase cyp521A1 then catalyzes the oxidative degradation of discoidol to form the trisnorsesquiterpene discodiene. The chain is Cytochrome P450 monooxygenase 521A1 (cyp521A1) from Dictyostelium discoideum (Social amoeba).